The primary structure comprises 84 residues: Large ribosomal subunit protein bL27 (84 aa).

The segment at 1–21 (MAHKKGGGSTKNGRDSNPKYL) is disordered.

The protein belongs to the bacterial ribosomal protein bL27 family.

The polypeptide is Large ribosomal subunit protein bL27 (Chlorobium phaeovibrioides (strain DSM 265 / 1930) (Prosthecochloris vibrioformis (strain DSM 265))).